A 258-amino-acid polypeptide reads, in one-letter code: Type III pantothenate kinase (258 aa).

6–13 (DVGNTNTV) contacts ATP. Substrate is bound by residues Y100 and 107 to 110 (GADR). Residue D109 is the Proton acceptor of the active site. K(+) is bound at residue D129. An ATP-binding site is contributed by T132. Substrate is bound at residue T184.

The protein belongs to the type III pantothenate kinase family. In terms of assembly, homodimer. The cofactor is NH4(+). It depends on K(+) as a cofactor.

It localises to the cytoplasm. It catalyses the reaction (R)-pantothenate + ATP = (R)-4'-phosphopantothenate + ADP + H(+). The protein operates within cofactor biosynthesis; coenzyme A biosynthesis; CoA from (R)-pantothenate: step 1/5. In terms of biological role, catalyzes the phosphorylation of pantothenate (Pan), the first step in CoA biosynthesis. The polypeptide is Type III pantothenate kinase (Geobacillus kaustophilus (strain HTA426)).